The primary structure comprises 290 residues: N-acetylneuraminate lyase (290 aa).

Aceneuramate is bound by residues serine 44 and threonine 45. Tyrosine 133 acts as the Proton donor in catalysis. The Schiff-base intermediate with substrate role is filled by lysine 161. Aceneuramate-binding residues include threonine 163, glycine 185, aspartate 187, glutamate 188, and serine 204.

The protein belongs to the DapA family. NanA subfamily. Homotetramer.

It is found in the cytoplasm. The catalysed reaction is aceneuramate = aldehydo-N-acetyl-D-mannosamine + pyruvate. Its pathway is amino-sugar metabolism; N-acetylneuraminate degradation; D-fructose 6-phosphate from N-acetylneuraminate: step 1/5. Catalyzes the reversible aldol cleavage of N-acetylneuraminic acid (sialic acid; Neu5Ac) to form pyruvate and N-acetylmannosamine (ManNAc) via a Schiff base intermediate. This Fusobacterium nucleatum subsp. nucleatum (strain ATCC 25586 / DSM 15643 / BCRC 10681 / CIP 101130 / JCM 8532 / KCTC 2640 / LMG 13131 / VPI 4355) protein is N-acetylneuraminate lyase.